We begin with the raw amino-acid sequence, 197 residues long: Holliday junction branch migration complex subunit RuvA (197 aa).

A domain I region spans residues 1–64 (MIASVRGVVQ…EDMLALFGFS (64 aa)). The tract at residues 65–143 (SPAQRALFEL…VATISPQLST (79 aa)) is domain II. A flexible linker region spans residues 144–153 (NPGLLALNTE). Residues 153–197 (ELIDILTSLGYSTTEAQAALNALPADAPADTEERLRLALQYFGGV) are domain III.

It belongs to the RuvA family. In terms of assembly, homotetramer. Forms an RuvA(8)-RuvB(12)-Holliday junction (HJ) complex. HJ DNA is sandwiched between 2 RuvA tetramers; dsDNA enters through RuvA and exits via RuvB. An RuvB hexamer assembles on each DNA strand where it exits the tetramer. Each RuvB hexamer is contacted by two RuvA subunits (via domain III) on 2 adjacent RuvB subunits; this complex drives branch migration. In the full resolvosome a probable DNA-RuvA(4)-RuvB(12)-RuvC(2) complex forms which resolves the HJ.

The protein resides in the cytoplasm. In terms of biological role, the RuvA-RuvB-RuvC complex processes Holliday junction (HJ) DNA during genetic recombination and DNA repair, while the RuvA-RuvB complex plays an important role in the rescue of blocked DNA replication forks via replication fork reversal (RFR). RuvA specifically binds to HJ cruciform DNA, conferring on it an open structure. The RuvB hexamer acts as an ATP-dependent pump, pulling dsDNA into and through the RuvAB complex. HJ branch migration allows RuvC to scan DNA until it finds its consensus sequence, where it cleaves and resolves the cruciform DNA. The polypeptide is Holliday junction branch migration complex subunit RuvA (Herpetosiphon aurantiacus (strain ATCC 23779 / DSM 785 / 114-95)).